The sequence spans 497 residues: Probable pyruvate kinase, cytosolic isozyme (497 aa).

Arginine 37 contacts substrate. K(+)-binding residues include asparagine 39, serine 41, aspartate 71, and threonine 72. 39–42 (NFSH) contributes to the ATP binding site. Positions 78 and 163 each coordinate ATP. Lysine 227 provides a ligand contact to substrate. A Mg(2+)-binding site is contributed by glutamate 229. The substrate site is built by glycine 252, aspartate 253, and threonine 285. Aspartate 253 contacts Mg(2+).

This sequence belongs to the pyruvate kinase family. As to quaternary structure, homotetramer. The cofactor is Mg(2+). Requires K(+) as cofactor.

It localises to the cytoplasm. It is found in the cytosol. The enzyme catalyses pyruvate + ATP = phosphoenolpyruvate + ADP + H(+). Its pathway is carbohydrate degradation; glycolysis; pyruvate from D-glyceraldehyde 3-phosphate: step 5/5. Its function is as follows. Key regulatory enzyme of the glycolytic pathway that catalyzes the final step of glycolysis, converting ADP and phosphoenolpyruvate (PEP) to ATP and pyruvate by essentially irreversible transphosphorylation. In Arabidopsis thaliana (Mouse-ear cress), this protein is Probable pyruvate kinase, cytosolic isozyme.